The sequence spans 229 residues: GTP:AMP phosphotransferase (229 aa).

Position 10 to 15 (glycine 10 to threonine 15) interacts with a ribonucleoside 5'-triphosphate. Positions asparagine 30 to valine 59 are NMP. AMP-binding positions include arginine 36, asparagine 57–valine 59, glycine 87, glycine 87–arginine 90, and glutamine 94. The LID stretch occupies residues glycine 123–aspartate 170. AMP is bound at residue arginine 178.

It belongs to the adenylate kinase family.

The protein resides in the mitochondrion. The enzyme catalyses a ribonucleoside 5'-triphosphate + AMP = a ribonucleoside 5'-diphosphate + ADP. It catalyses the reaction GTP + AMP = GDP + ADP. With respect to regulation, inhibited by the dinucleoside pentaphosphate compound P1,P5-di(guanosine-5') pentaphosphate (GP5A). Functionally, catalyzes the reversible transfer of the terminal phosphate group between GTP and AMP. Has very low activity with UTP, ITP, CTP and IMP and no activity with ATP, GMP, CMP and UMP in vitro. This chain is GTP:AMP phosphotransferase, found in Plasmodium falciparum (isolate 3D7).